The primary structure comprises 259 residues: Ubiquitin-conjugating enzyme E2 J2 (259 aa).

Residues 1-226 (MSSNSVKRAP…AGLQQANRHH (226 aa)) are Cytoplasmic-facing. Positions 12-162 (TATQRLKQDY…DKVFCELFPE (151 aa)) constitute a UBC core domain. C94 functions as the Glycyl thioester intermediate in the catalytic mechanism. The disordered stretch occupies residues 174-200 (QDELSSRPQALPLPDVVPDGETHHGQH). A helical; Anchor for type IV membrane protein transmembrane segment spans residues 227-247 (GLLGGALANLFVIVGFAAFAY). At 248-259 (TVKYVLRSIAQE) the chain is on the lumenal side.

Belongs to the ubiquitin-conjugating enzyme family.

It is found in the endoplasmic reticulum membrane. It carries out the reaction S-ubiquitinyl-[E1 ubiquitin-activating enzyme]-L-cysteine + [E2 ubiquitin-conjugating enzyme]-L-cysteine = [E1 ubiquitin-activating enzyme]-L-cysteine + S-ubiquitinyl-[E2 ubiquitin-conjugating enzyme]-L-cysteine.. The protein operates within protein modification; protein ubiquitination. Functionally, catalyzes the covalent attachment of ubiquitin to other proteins. Seems to function in the selective degradation of misfolded membrane proteins from the endoplasmic reticulum (ERAD). In cooperation with the GATOR2 complex, catalyzes 'Lys-6'-linked ubiquitination of NPRL2. The protein is Ubiquitin-conjugating enzyme E2 J2 (UBE2J2) of Bos taurus (Bovine).